A 401-amino-acid chain; its full sequence is F-box protein At2g43440 (401 aa).

The F-box domain maps to 7–53; it reads NTNSIYIVPELLEDIFLRLPLKSILKFKTVSRQWRSILESKLFVERR.

The sequence is that of F-box protein At2g43440 from Arabidopsis thaliana (Mouse-ear cress).